Reading from the N-terminus, the 518-residue chain is Zinc finger protein 776 (518 aa).

The region spanning 14–89 (VTFEDVAVNF…HWTGVCTKKV (76 aa)) is the KRAB domain. Residues Lys171, Lys196, Lys220, and Lys247 each participate in a glycyl lysine isopeptide (Lys-Gly) (interchain with G-Cter in SUMO2) cross-link. The segment at 208 to 230 (YICGESTIPFSNKHSLVLHQRLL) adopts a C2H2-type 1; degenerate zinc-finger fold. The C2H2-type 2; degenerate zinc-finger motif lies at 236 to 258 (YVCSDSGKFTSKSNSFNNHQGVR). 7 consecutive C2H2-type zinc fingers follow at residues 264–286 (YQCG…QRVH), 292–314 (YECG…QRVH), 320–342 (YECD…QRVH), 348–370 (YQCG…QRVH), 376–398 (FECT…QRVH), 404–426 (YECK…QRVH), and 432–454 (YECR…QQIH). The C2H2-type 10; degenerate zinc finger occupies 460–482 (HECGECGKCFHQKGSLIRHQQIH). The segment at 488-510 (HECGECGKCFRQKGNLIKHQRVH) adopts a C2H2-type 11 zinc-finger fold.

This sequence belongs to the krueppel C2H2-type zinc-finger protein family.

The protein localises to the nucleus. May be involved in transcriptional regulation. This Homo sapiens (Human) protein is Zinc finger protein 776 (ZNF776).